Here is a 184-residue protein sequence, read N- to C-terminus: Acetyl-CoA decarbonylase/synthase complex subunit epsilon 1 (184 aa).

The protein belongs to the CdhB family. Heterotetramer of two alpha and two epsilon subunits. The ACDS complex is made up of alpha, epsilon, beta, gamma and delta subunits with a probable stoichiometry of (alpha(2)epsilon(2))(4)-beta(8)-(gamma(1)delta(1))(8).

In terms of biological role, part of a complex that catalyzes the reversible cleavage of acetyl-CoA, allowing autotrophic growth from CO(2). The alpha-epsilon subcomponent functions as a carbon monoxide dehydrogenase. The precise role of the epsilon subunit is unclear; it may have a stabilizing role within the alpha(2)epsilon(2) component and/or be involved in electron transfer to FAD during a potential FAD-mediated CO oxidation. The sequence is that of Acetyl-CoA decarbonylase/synthase complex subunit epsilon 1 (cdhB1) from Archaeoglobus fulgidus (strain ATCC 49558 / DSM 4304 / JCM 9628 / NBRC 100126 / VC-16).